The following is a 633-amino-acid chain: Mini-chromosome maintenance complex-binding protein (633 aa).

The disordered stretch occupies residues Pro154–Lys198. Over residues Glu174 to His184 the composition is skewed to basic and acidic residues.

It belongs to the MCMBP family. As to quaternary structure, interacts with the MCM complex: associates with the MCM3-7 complex which lacks MCM2, while it does not interact with the MCM complex when MCM2 is present (MCM2-7 complex).

Its subcellular location is the nucleus. Its function is as follows. Associated component of the MCM complex that acts as a regulator of DNA replication. Binds to the MCM complex during late S phase and promotes the disassembly of the MCM complex from chromatin, thereby acting as a key regulator of pre-replication complex (pre-RC) unloading from replicated DNA. Can dissociate the MCM complex without addition of ATP; probably acts by destabilizing interactions of each individual subunits of the MCM complex. Required for sister chromatid cohesion. The polypeptide is Mini-chromosome maintenance complex-binding protein (MCMBP) (Gallus gallus (Chicken)).